Consider the following 552-residue polypeptide: Putative phosphate permease MT2339 (552 aa).

13 helical membrane passes run tryptophan 38–phenylalanine 58, isoleucine 69–valine 89, alanine 107–threonine 127, aspartate 146–asparagine 166, isoleucine 178–alanine 198, valine 213–isoleucine 233, valine 326–phenylalanine 346, phenylalanine 360–leucine 380, threonine 389–glycine 409, alanine 437–isoleucine 457, methionine 472–threonine 492, valine 493–isoleucine 513, and isoleucine 526–valine 546.

Belongs to the inorganic phosphate transporter (PiT) (TC 2.A.20) family.

It localises to the cell membrane. Potential transporter for phosphate. This Mycobacterium tuberculosis (strain CDC 1551 / Oshkosh) protein is Putative phosphate permease MT2339.